A 310-amino-acid polypeptide reads, in one-letter code: Homoserine O-acetyltransferase (310 aa).

Catalysis depends on Cys142, which acts as the Acyl-thioester intermediate. Substrate is bound by residues Lys163 and Ser192. Residue His235 is the Proton acceptor of the active site. Residue Glu237 is part of the active site. Residue Arg249 participates in substrate binding.

It belongs to the MetA family.

It localises to the cytoplasm. It catalyses the reaction L-homoserine + acetyl-CoA = O-acetyl-L-homoserine + CoA. Its pathway is amino-acid biosynthesis; L-methionine biosynthesis via de novo pathway; O-acetyl-L-homoserine from L-homoserine: step 1/1. In terms of biological role, transfers an acetyl group from acetyl-CoA to L-homoserine, forming acetyl-L-homoserine. This is Homoserine O-acetyltransferase from Agathobacter rectalis (strain ATCC 33656 / DSM 3377 / JCM 17463 / KCTC 5835 / VPI 0990) (Eubacterium rectale).